We begin with the raw amino-acid sequence, 442 residues long: Mirror-image polydactyly gene 1 protein (442 aa).

The tract at residues Met-1–His-39 is disordered. Polar residues predominate over residues Tyr-12–Glu-35. Coiled coils occupy residues Ser-107 to Ile-212 and Glu-253 to Thr-435.

In terms of tissue distribution, expressed very weakly in heart, liver, skeletal muscle, kidney, pancreas and fetal kidney. Not detected in brain, placenta and lung.

The chain is Mirror-image polydactyly gene 1 protein (MIPOL1) from Homo sapiens (Human).